The following is a 558-amino-acid chain: Ceramide kinase-like protein (558 aa).

The disordered stretch occupies residues 1–36 (MPWRRRRNRVSALEGGREEEAPPEAAAVPPALLTSP). Short sequence motifs (nuclear localization signal) lie at residues 2 to 9 (PWRRRRNR) and 102 to 106 (KLKRR). One can recognise a DAGKc domain in the interval 164–339 (NRPKSLKILL…VDVCTFSTAG (176 aa)).

Post-translationally, phosphorylated on serine residues. As to expression, isoform 1 and isoform 2 are expressed in adult retina, liver and pancreas as well as in fetal brain, lung and kidney. Isoform 3 is expressed in adult retina as well as in fetal lung and liver. Isoform 4 is expressed in adult retina, lung and kidney as well as in fetal lung and liver. Moderately expressed in retina, kidney, lung, testis, trachea, and pancreas. Weakly expressed in brain, placenta and liver.

The protein localises to the cytoplasm. The protein resides in the nucleus. It is found in the nucleolus. It localises to the golgi apparatus. Its subcellular location is the trans-Golgi network. The protein localises to the endoplasmic reticulum. In terms of biological role, has no detectable ceramide-kinase activity. Overexpression of CERKL protects cells from apoptosis in oxidative stress conditions. The protein is Ceramide kinase-like protein (CERKL) of Homo sapiens (Human).